We begin with the raw amino-acid sequence, 82 residues long: Putative Fe(2+) transport protein A (82 aa).

This sequence belongs to the FeoA family.

Its function is as follows. Might be involved in Fe(2+) ion uptake. This Leptolyngbya boryana (Plectonema boryanum) protein is Putative Fe(2+) transport protein A.